We begin with the raw amino-acid sequence, 91 residues long: Protein LURE 1.6 (91 aa).

Residues 1–20 (MKLPFIFLITLLIFVSSCTS) form the signal peptide. 3 disulfide bridges follow: Cys-59–Cys-76, Cys-62–Cys-83, and Cys-66–Cys-85.

The protein belongs to the DEFL family. Expressed in the pistil. Detected in the synergid cells.

It is found in the secreted. Its function is as follows. Pollen tube attractants guiding pollen tubes to the ovular micropyle. This is Protein LURE 1.6 from Arabidopsis thaliana (Mouse-ear cress).